The chain runs to 51 residues: Large ribosomal subunit protein eL39 (51 aa).

The protein belongs to the eukaryotic ribosomal protein eL39 family.

This is Large ribosomal subunit protein eL39 from Methanopyrus kandleri (strain AV19 / DSM 6324 / JCM 9639 / NBRC 100938).